The sequence spans 216 residues: PRA1 family protein B6 (216 aa).

A2 is subject to N-acetylalanine. Helical transmembrane passes span 83–103 (LVAI…FLLA), 105–125 (LAAS…LVIG), 135–155 (LGIL…GSLL), 159–179 (LAVG…EDLF), and 186–206 (IGSG…AAAI).

The protein belongs to the PRA1 family. Interacts with PRA1B1, PRA1B2, PRA1B3, PRA1B4, PRA1B5 and PRA1E. As to expression, expressed in hypocotyls, roots, lateral roots, lateral root caps, columella cells, leaves and stomata.

It is found in the endoplasmic reticulum membrane. Its function is as follows. May be involved in both secretory and endocytic intracellular trafficking in the endosomal/prevacuolar compartments. The protein is PRA1 family protein B6 (PRA1B6) of Arabidopsis thaliana (Mouse-ear cress).